A 339-amino-acid polypeptide reads, in one-letter code: Erlin-2 (339 aa).

Topologically, residues 1–3 (MAQ) are cytoplasmic. A helical transmembrane segment spans residues 4-24 (LGAVVAVASSFFCASLFSAVH). The Lumenal segment spans residues 25-339 (KIEEGHIGVY…EPLETATKEN (315 aa)). An N-linked (GlcNAc...) asparagine glycan is attached at Asn-106. The tract at residues 177 to 309 (EAIRRNYELM…DIPNMFMDSA (133 aa)) is interaction with ERLIN1. Lys-267 carries the post-translational modification N6-acetyllysine.

This sequence belongs to the band 7/mec-2 family. In terms of assembly, forms a heteromeric complex with ERLIN1. In complex with ERLIN1, interacts with RNF170. Interacts with activated ITPR1, independently of the degree of ITPR1 polyubiquitination. Interacts with SCAP, INSIG1, SREBF1 and SREBF2 under cholesterol sufficiency conditions; indicative for an association with the SCAP-SREBP-INSIG complex. Probably part of an AMFR/gp78 and INSIG1-containing ubiquitin ligase complex involved in ERAD of HMGCR. Interacts with TMUB1; TMUB1 bridges the association with AMFR. Interacts with SYVN1 and RNF139. Interacts with TMEM259. Interacts with TMEM41B. Post-translationally, deubiquitinated by USP25; leading to stabilization. Ubiquitous.

The protein resides in the endoplasmic reticulum membrane. Component of the ERLIN1/ERLIN2 complex which mediates the endoplasmic reticulum-associated degradation (ERAD) of inositol 1,4,5-trisphosphate receptors (IP3Rs) such as ITPR1. Promotes sterol-accelerated ERAD of HMGCR probably implicating an AMFR/gp78-containing ubiquitin ligase complex. Involved in regulation of cellular cholesterol homeostasis by regulation the SREBP signaling pathway. May promote ER retention of the SCAP-SREBF complex. This is Erlin-2 (ERLIN2) from Homo sapiens (Human).